A 492-amino-acid polypeptide reads, in one-letter code: Ketol-acid reductoisomerase (NADP(+)) (492 aa).

A KARI N-terminal Rossmann domain is found at Ala-15 to Ser-208. NADP(+) is bound by residues Cys-45–Gln-48, Arg-68, Arg-76, Ser-78, and Asp-108–Gln-110. His-132 is a catalytic residue. Gly-158 is an NADP(+) binding site. KARI C-terminal knotted domains follow at residues Ser-209–Glu-344 and Tyr-345–Met-485. Residues Asp-217, Glu-221, Glu-389, and Glu-393 each contribute to the Mg(2+) site. Ser-414 is a substrate binding site.

The protein belongs to the ketol-acid reductoisomerase family. Mg(2+) is required as a cofactor.

It carries out the reaction (2R)-2,3-dihydroxy-3-methylbutanoate + NADP(+) = (2S)-2-acetolactate + NADPH + H(+). The enzyme catalyses (2R,3R)-2,3-dihydroxy-3-methylpentanoate + NADP(+) = (S)-2-ethyl-2-hydroxy-3-oxobutanoate + NADPH + H(+). It functions in the pathway amino-acid biosynthesis; L-isoleucine biosynthesis; L-isoleucine from 2-oxobutanoate: step 2/4. It participates in amino-acid biosynthesis; L-valine biosynthesis; L-valine from pyruvate: step 2/4. Its function is as follows. Involved in the biosynthesis of branched-chain amino acids (BCAA). Catalyzes an alkyl-migration followed by a ketol-acid reduction of (S)-2-acetolactate (S2AL) to yield (R)-2,3-dihydroxy-isovalerate. In the isomerase reaction, S2AL is rearranged via a Mg-dependent methyl migration to produce 3-hydroxy-3-methyl-2-ketobutyrate (HMKB). In the reductase reaction, this 2-ketoacid undergoes a metal-dependent reduction by NADPH to yield (R)-2,3-dihydroxy-isovalerate. The chain is Ketol-acid reductoisomerase (NADP(+)) from Photorhabdus laumondii subsp. laumondii (strain DSM 15139 / CIP 105565 / TT01) (Photorhabdus luminescens subsp. laumondii).